Reading from the N-terminus, the 135-residue chain is Transcription antitermination protein NusB (135 aa).

The protein belongs to the NusB family.

Involved in transcription antitermination. Required for transcription of ribosomal RNA (rRNA) genes. Binds specifically to the boxA antiterminator sequence of the ribosomal RNA (rrn) operons. The protein is Transcription antitermination protein NusB of Bdellovibrio bacteriovorus (strain ATCC 15356 / DSM 50701 / NCIMB 9529 / HD100).